We begin with the raw amino-acid sequence, 345 residues long: Isopentenyl-diphosphate delta-isomerase (345 aa).

14–15 lines the substrate pocket; it reads RK. Residues S71, 72–74, S102, and N130 contribute to the FMN site; that span reads SMT. Substrate is bound at residue 102 to 104; sequence SMR. Residue Q165 coordinates substrate. Mg(2+) is bound at residue E166. Residues K197, T227, 277-279, and 298-299 each bind FMN; these read GLK and AG.

The protein belongs to the IPP isomerase type 2 family. As to quaternary structure, homooctamer. Dimer of tetramers. FMN serves as cofactor. The cofactor is NADPH. Requires Mg(2+) as cofactor.

It localises to the cytoplasm. It catalyses the reaction isopentenyl diphosphate = dimethylallyl diphosphate. Its function is as follows. Involved in the biosynthesis of isoprenoids. Catalyzes the 1,3-allylic rearrangement of the homoallylic substrate isopentenyl (IPP) to its allylic isomer, dimethylallyl diphosphate (DMAPP). The sequence is that of Isopentenyl-diphosphate delta-isomerase from Rickettsia felis (strain ATCC VR-1525 / URRWXCal2) (Rickettsia azadi).